Reading from the N-terminus, the 694-residue chain is DNA primase (694 aa).

A CHC2-type zinc finger spans residues 41 to 65 (CPFHDDKSPSFTVSPAKQFYYCFSC). The 84-residue stretch at 265-348 (DQAVVVEGYF…QGQVQLRVLN (84 aa)) folds into the Toprim domain. Mg(2+) contacts are provided by Glu271, Asp317, and Asp319.

Belongs to the DnaG primase family. As to quaternary structure, monomer. Interacts with DnaB. Zn(2+) serves as cofactor. Requires Mg(2+) as cofactor.

It carries out the reaction ssDNA + n NTP = ssDNA/pppN(pN)n-1 hybrid + (n-1) diphosphate.. Its function is as follows. RNA polymerase that catalyzes the synthesis of short RNA molecules used as primers for DNA polymerase during DNA replication. The polypeptide is DNA primase (Synechococcus elongatus (strain ATCC 33912 / PCC 7942 / FACHB-805) (Anacystis nidulans R2)).